We begin with the raw amino-acid sequence, 246 residues long: Probable transcriptional regulatory protein COSY_0365 (246 aa).

Belongs to the TACO1 family.

The protein resides in the cytoplasm. In Vesicomyosocius okutanii subsp. Calyptogena okutanii (strain HA), this protein is Probable transcriptional regulatory protein COSY_0365.